A 69-amino-acid polypeptide reads, in one-letter code: uncharacterized protein (69 aa).

The chain crosses the membrane as a helical span at residues 13-35 (IRSINPTLLNFINYFLLIVPQFI).

The protein localises to the membrane. This is an uncharacterized protein from Saccharomyces cerevisiae (strain ATCC 204508 / S288c) (Baker's yeast).